The primary structure comprises 146 residues: Hemoglobin subunit beta (146 aa).

Positions 2 to 146 constitute a Globin domain; the sequence is PFSAHEEKLI…VAAALSAEYH (145 aa). Heme b-binding residues include His-63 and His-92.

This sequence belongs to the globin family. In terms of assembly, heterotetramer of two alpha chains and two beta chains. Red blood cells.

In terms of biological role, involved in oxygen transport from the lung to the various peripheral tissues. In Caiman crocodilus (Spectacled caiman), this protein is Hemoglobin subunit beta (HBB).